A 387-amino-acid polypeptide reads, in one-letter code: Protein phosphatase 2C 50 (387 aa).

The PPM-type phosphatase domain occupies 60-377; it reads VWGCASTRGR…DNITVIVVDL (318 aa). The Mn(2+) site is built by Asp118 and Gly119. The Modulates binding affinity to PYR/PYL/RCAR abscisic acid intracellular receptors signature appears at 264-268; sequence VSGIL. Mn(2+) contacts are provided by Asp306 and Asp368.

It belongs to the PP2C family. Interacts with PYL3, PYL5, PYL9 and PYL10. Binding to PYL3, PYL5, PYL9 and PYL10 is dependent on the presence of abscisic acid (ABA). Interacts with SAPK10. Mg(2+) serves as cofactor. Requires Mn(2+) as cofactor.

It catalyses the reaction O-phospho-L-seryl-[protein] + H2O = L-seryl-[protein] + phosphate. The catalysed reaction is O-phospho-L-threonyl-[protein] + H2O = L-threonyl-[protein] + phosphate. Its function is as follows. Protein phosphatase involved in abscisic acid (ABA) signaling. Together with PYL3 and SAPK10, may form an ABA signaling module involved in stress response. This Oryza sativa subsp. japonica (Rice) protein is Protein phosphatase 2C 50.